The chain runs to 382 residues: Histidinol-phosphate aminotransferase (382 aa).

The interval Met1–Ser24 is disordered. Residues Pro9–Gly22 show a composition bias toward basic and acidic residues. Lys233 is modified (N6-(pyridoxal phosphate)lysine).

The protein belongs to the class-II pyridoxal-phosphate-dependent aminotransferase family. Histidinol-phosphate aminotransferase subfamily. Homodimer. It depends on pyridoxal 5'-phosphate as a cofactor.

It carries out the reaction L-histidinol phosphate + 2-oxoglutarate = 3-(imidazol-4-yl)-2-oxopropyl phosphate + L-glutamate. It functions in the pathway amino-acid biosynthesis; L-histidine biosynthesis; L-histidine from 5-phospho-alpha-D-ribose 1-diphosphate: step 7/9. The protein is Histidinol-phosphate aminotransferase of Mycobacterium ulcerans (strain Agy99).